We begin with the raw amino-acid sequence, 498 residues long: ATP synthase subunit beta, chloroplastic (498 aa).

Position 172–179 (172–179) interacts with ATP; it reads GGAGVGKT.

Belongs to the ATPase alpha/beta chains family. In terms of assembly, F-type ATPases have 2 components, CF(1) - the catalytic core - and CF(0) - the membrane proton channel. CF(1) has five subunits: alpha(3), beta(3), gamma(1), delta(1), epsilon(1). CF(0) has four main subunits: a(1), b(1), b'(1) and c(9-12).

It is found in the plastid. The protein localises to the chloroplast thylakoid membrane. It carries out the reaction ATP + H2O + 4 H(+)(in) = ADP + phosphate + 5 H(+)(out). Produces ATP from ADP in the presence of a proton gradient across the membrane. The catalytic sites are hosted primarily by the beta subunits. This is ATP synthase subunit beta, chloroplastic from Lolium perenne (Perennial ryegrass).